Reading from the N-terminus, the 162-residue chain is 2-C-methyl-D-erythritol 2,4-cyclodiphosphate synthase (162 aa).

Aspartate 8 and histidine 10 together coordinate a divalent metal cation. Residues 8–10 (DVH) and 36–37 (HS) each bind 4-CDP-2-C-methyl-D-erythritol 2-phosphate. A divalent metal cation is bound at residue histidine 44. Residues 58-60 (DIG), 63-67 (FPDTD), 102-108 (AQAPKMA), 134-137 (TTTE), phenylalanine 141, and arginine 144 contribute to the 4-CDP-2-C-methyl-D-erythritol 2-phosphate site.

The protein belongs to the IspF family. Homotrimer. A divalent metal cation is required as a cofactor.

The catalysed reaction is 4-CDP-2-C-methyl-D-erythritol 2-phosphate = 2-C-methyl-D-erythritol 2,4-cyclic diphosphate + CMP. Its pathway is isoprenoid biosynthesis; isopentenyl diphosphate biosynthesis via DXP pathway; isopentenyl diphosphate from 1-deoxy-D-xylulose 5-phosphate: step 4/6. Functionally, involved in the biosynthesis of isopentenyl diphosphate (IPP) and dimethylallyl diphosphate (DMAPP), two major building blocks of isoprenoid compounds. Catalyzes the conversion of 4-diphosphocytidyl-2-C-methyl-D-erythritol 2-phosphate (CDP-ME2P) to 2-C-methyl-D-erythritol 2,4-cyclodiphosphate (ME-CPP) with a corresponding release of cytidine 5-monophosphate (CMP). The protein is 2-C-methyl-D-erythritol 2,4-cyclodiphosphate synthase of Yersinia pseudotuberculosis serotype IB (strain PB1/+).